Here is a 285-residue protein sequence, read N- to C-terminus: sn-2 palmitoyl-lipid 9-desaturase (285 aa).

A run of 2 helical transmembrane segments spans residues 20–40 (WINVVFFGVFHALALLSPWFF) and 44–64 (ALGLLVFLHWLFGSIGICLGY). The Histidine box-1 signature appears at 65–70 (HRLLSH). Residues 81 to 101 (YAIALIGALALQGGPIFWVGG) form a helical membrane-spanning segment. The short motif at 102–106 (HRQHH) is the Histidine box-2 element. The helical transmembrane segment at 169–189 (IPFALLLYVLGGWPFVFYGVF) threads the bilayer. The Histidine box-3 motif lies at 239–243 (HHTYP).

This sequence belongs to the fatty acid desaturase type 2 family. The cofactor is Fe(2+).

Its subcellular location is the membrane. It carries out the reaction a 1-acyl-2-hexadecanoyl-glycerolipid + 2 reduced [2Fe-2S]-[ferredoxin] + O2 + 2 H(+) = a 1-acyl-2-[(9Z)-hexadecenoyl]-glycerolipid + 2 oxidized [2Fe-2S]-[ferredoxin] + 2 H2O. It participates in lipid metabolism; fatty acid biosynthesis. Functionally, desaturase involved in fatty acid biosynthesis. Introduces a double bond at carbon 9 of palmitoyl groups (16:0) attached to the sn-2 position of the glycerol moiety of membrane glycerolipids. The protein is sn-2 palmitoyl-lipid 9-desaturase of Nostoc sp. (strain 36).